A 582-amino-acid chain; its full sequence is Proline--tRNA ligase (582 aa).

This sequence belongs to the class-II aminoacyl-tRNA synthetase family. ProS type 1 subfamily. In terms of assembly, homodimer.

The protein resides in the cytoplasm. The enzyme catalyses tRNA(Pro) + L-proline + ATP = L-prolyl-tRNA(Pro) + AMP + diphosphate. Functionally, catalyzes the attachment of proline to tRNA(Pro) in a two-step reaction: proline is first activated by ATP to form Pro-AMP and then transferred to the acceptor end of tRNA(Pro). As ProRS can inadvertently accommodate and process non-cognate amino acids such as alanine and cysteine, to avoid such errors it has two additional distinct editing activities against alanine. One activity is designated as 'pretransfer' editing and involves the tRNA(Pro)-independent hydrolysis of activated Ala-AMP. The other activity is designated 'posttransfer' editing and involves deacylation of mischarged Ala-tRNA(Pro). The misacylated Cys-tRNA(Pro) is not edited by ProRS. The chain is Proline--tRNA ligase from Mycobacterium avium (strain 104).